Reading from the N-terminus, the 369-residue chain is GDSL esterase/lipase At5g41890 (369 aa).

Serine 32 (nucleophile) is an active-site residue. Residues aspartate 334 and histidine 337 contribute to the active site.

It belongs to the 'GDSL' lipolytic enzyme family.

The protein is GDSL esterase/lipase At5g41890 of Arabidopsis thaliana (Mouse-ear cress).